The following is a 118-amino-acid chain: Large ribosomal subunit protein uL18 (118 aa).

Residues 1 to 25 (MITKPDKNKVRQKRHRRVRGKLSGT) are disordered. Basic residues predominate over residues 10-20 (VRQKRHRRVRG).

It belongs to the universal ribosomal protein uL18 family. In terms of assembly, part of the 50S ribosomal subunit; part of the 5S rRNA/L5/L18/L25 subcomplex. Contacts the 5S and 23S rRNAs.

This is one of the proteins that bind and probably mediate the attachment of the 5S RNA into the large ribosomal subunit, where it forms part of the central protuberance. The sequence is that of Large ribosomal subunit protein uL18 from Streptococcus gordonii (strain Challis / ATCC 35105 / BCRC 15272 / CH1 / DL1 / V288).